The chain runs to 387 residues: Small ribosomal subunit biogenesis GTPase RsgA (387 aa).

A CP-type G domain is found at 112–273 (YDGLKPVAAN…LIDSPGVREF (162 aa)). GTP-binding positions include 159–162 (NKID) and 213–221 (GQSGVGKSS). Zn(2+)-binding residues include Cys297, Cys302, His304, and Cys310.

This sequence belongs to the TRAFAC class YlqF/YawG GTPase family. RsgA subfamily. As to quaternary structure, monomer. Associates with 30S ribosomal subunit, binds 16S rRNA. Zn(2+) serves as cofactor.

The protein localises to the cytoplasm. Its function is as follows. One of several proteins that assist in the late maturation steps of the functional core of the 30S ribosomal subunit. Helps release RbfA from mature subunits. May play a role in the assembly of ribosomal proteins into the subunit. Circularly permuted GTPase that catalyzes slow GTP hydrolysis, GTPase activity is stimulated by the 30S ribosomal subunit. This Vibrio cholerae serotype O1 (strain ATCC 39315 / El Tor Inaba N16961) protein is Small ribosomal subunit biogenesis GTPase RsgA.